The chain runs to 212 residues: Probable GH family 25 lysozyme 2 (212 aa).

Positions Met1–Ala19 are cleaved as a signal peptide. The region spanning Ile20–Pro212 is the Ch-type lysozyme domain. Active-site residues include Asp24, Asp112, and Glu114.

This sequence belongs to the glycosyl hydrolase 25 family.

The protein resides in the secreted. It catalyses the reaction Hydrolysis of (1-&gt;4)-beta-linkages between N-acetylmuramic acid and N-acetyl-D-glucosamine residues in a peptidoglycan and between N-acetyl-D-glucosamine residues in chitodextrins.. The sequence is that of Probable GH family 25 lysozyme 2 from Dictyostelium discoideum (Social amoeba).